A 483-amino-acid chain; its full sequence is Islet cell autoantigen 1 (483 aa).

Positions 51–254 constitute an AH domain; sequence ASDADLDAKL…TSHTMAAIHE (204 aa). A disordered region spans residues 281–321; it reads EEKKKINQQESTDAAVQEPSQLISLEEENQRKESSSFKTED. Residues 288 to 303 show a composition bias toward polar residues; the sequence is QQESTDAAVQEPSQLI. The span at 308 to 321 shows a compositional bias: basic and acidic residues; the sequence is ENQRKESSSFKTED.

As to expression, expressed abundantly in pancreas, heart and brain with low levels of expression in lung, kidney, liver and thyroid.

It localises to the cytoplasm. It is found in the cytosol. Its subcellular location is the golgi apparatus membrane. The protein localises to the cytoplasmic vesicle. The protein resides in the secretory vesicle membrane. It localises to the secretory vesicle. It is found in the synaptic vesicle membrane. In terms of biological role, may play a role in neurotransmitter secretion. The polypeptide is Islet cell autoantigen 1 (ICA1) (Homo sapiens (Human)).